The following is a 1048-amino-acid chain: PH and SEC7 domain-containing protein 3 (1048 aa).

Residues serine 36–aspartate 45 show a composition bias toward basic and acidic residues. Positions serine 36–threonine 57 are disordered. Residue serine 76 is modified to Phosphoserine. Disordered stretches follow at residues leucine 104–glutamine 126, glycine 310–arginine 342, serine 364–arginine 383, and glutamine 395–threonine 434. Over residues glycine 311 to aspartate 321 the composition is skewed to basic and acidic residues. Basic and acidic residues predominate over residues asparagine 397 to glycine 423. One can recognise an SEC7 domain in the interval threonine 534 to glutamate 734. Basic and acidic residues predominate over residues aspartate 741–asparagine 758. The tract at residues aspartate 741–glycine 769 is disordered. The residue at position 770 (serine 770) is a Phosphoserine. The PH domain occupies alanine 785 to alanine 898. The stretch at alanine 922–serine 952 forms a coiled coil. The interval aspartate 999–threonine 1048 is disordered. Phosphoserine occurs at positions 1009, 1011, 1012, 1014, and 1020. Residues serine 1011 to isoleucine 1022 show a composition bias toward polar residues. Over residues asparagine 1029 to glutamate 1039 the composition is skewed to basic and acidic residues.

Isoform 2 is expressed in epididymis (at protein level).

It is found in the cell membrane. The protein localises to the cell projection. It localises to the ruffle membrane. The protein resides in the postsynaptic density. Its function is as follows. Guanine nucleotide exchange factor for ARF6. This chain is PH and SEC7 domain-containing protein 3 (PSD3), found in Homo sapiens (Human).